Consider the following 81-residue polypeptide: Small ribosomal subunit protein bS18 (81 aa).

The protein belongs to the bacterial ribosomal protein bS18 family. Part of the 30S ribosomal subunit. Forms a tight heterodimer with protein bS6.

Binds as a heterodimer with protein bS6 to the central domain of the 16S rRNA, where it helps stabilize the platform of the 30S subunit. This chain is Small ribosomal subunit protein bS18, found in Chloroflexus aurantiacus (strain ATCC 29366 / DSM 635 / J-10-fl).